The primary structure comprises 79 residues: Conotoxin Vi6.1 (79 aa).

A signal peptide spans 1 to 22 (MKLTCVLIITVLFLTASQLITA). The propeptide occupies 23–47 (DYSRDQRQYRAVRLGDEMRNFKGAR). 3 disulfides stabilise this stretch: Cys49–Cys62, Cys56–Cys67, and Cys61–Cys77. Pro60 and Pro63 each carry 4-hydroxyproline.

As to expression, expressed by the venom duct.

The protein localises to the secreted. Its function is as follows. Ion channel inhibitor that inhibits the increase in intracellular calcium upon depolarization in DRG neurons. In vivo, both intraperitoneal and intracranial injections into mice induce hyperactivity. This chain is Conotoxin Vi6.1, found in Conus virgo (Virgin cone).